The chain runs to 163 residues: Carbon monoxide dehydrogenase small chain (163 aa).

Residues 4 to 80 (KIITVNVNGK…GSEVLTVEGL (77 aa)) form the 2Fe-2S ferredoxin-type domain. [2Fe-2S] cluster-binding residues include C42, C47, C50, C62, C101, C104, C136, and C138.

As to quaternary structure, dimer of heterotrimers. Each heterotrimer consists of a large, a medium and a small subunit. [2Fe-2S] cluster is required as a cofactor.

It catalyses the reaction CO + a quinone + H2O = a quinol + CO2. In terms of biological role, catalyzes the oxidation of carbon monoxide to carbon dioxide. The polypeptide is Carbon monoxide dehydrogenase small chain (cutS) (Hydrogenophaga pseudoflava (Pseudomonas carboxydoflava)).